The chain runs to 186 residues: UPF0200 protein Hbut_0338 (186 aa).

13–20 provides a ligand contact to ATP; that stretch reads GMPGSGKS.

This sequence belongs to the UPF0200 family.

This Hyperthermus butylicus (strain DSM 5456 / JCM 9403 / PLM1-5) protein is UPF0200 protein Hbut_0338.